We begin with the raw amino-acid sequence, 572 residues long: Phosphoglucomutase-2 (572 aa).

Substrate is bound by residues T23, R27, 126–127 (SH), and K140. The Phosphoserine intermediate role is filled by S126. S126 is a binding site for Mg(2+). Residues D308, D310, and D312 each contribute to the Mg(2+) site. Substrate is bound by residues 312 to 313 (DR), T373, 392 to 394 (EES), K405, and R527.

It belongs to the phosphohexose mutase family. Mg(2+) serves as cofactor. Phosphorylated via a calcium-dependent protein kinase.

The protein localises to the cytoplasm. It carries out the reaction alpha-D-glucose 1-phosphate = alpha-D-glucose 6-phosphate. Its function is as follows. May be involved in membrane fusion in exocytosis. This Paramecium tetraurelia protein is Phosphoglucomutase-2 (pp63-2).